A 1096-amino-acid chain; its full sequence is Lysine-specific demethylase 4B (1096 aa).

Residues Ile15–Arg57 enclose the JmjN domain. Tyr133 contributes to the 2-oxoglutarate binding site. Residues Val146 to Cys309 form the JmjC domain. Fe cation-binding residues include His189 and Glu191. 2-oxoglutarate-binding residues include Asn199 and Lys207. Residues Cys235 and His241 each coordinate Zn(2+). Lys242 contacts 2-oxoglutarate. His277 lines the Fe cation pocket. Residues Cys307 and Cys309 each contribute to the Zn(2+) site. The span at Leu369–Lys382 shows a compositional bias: basic residues. Disordered stretches follow at residues Leu369 to Ala478 and Lys557 to Pro649. Low complexity predominate over residues Pro391–Gly406. A compositionally biased stretch (acidic residues) spans Gly413–Pro425. Residues His430–Gly443 are compositionally biased toward basic and acidic residues. The segment covering Lys444–Ser458 has biased composition (basic residues). A Phosphoserine modification is found at Ser566. Position 602 is an N6-acetyllysine (Lys602). Acidic residues predominate over residues Ser632–Asp648. The segment at Met731–Ala789 adopts a PHD-type 1 zinc-finger fold. Residues Thr794–Ala827 form a C2HC pre-PHD-type zinc finger. The PHD-type 2 zinc-finger motif lies at Leu850–Lys907. Tudor domains lie at Arg917–Leu974 and Gly975–Pro1031. Residues Arg1037–Gly1073 are disordered. Thr1065 is modified (phosphothreonine).

It belongs to the JHDM3 histone demethylase family. The cofactor is Fe(2+).

It is found in the nucleus. The catalysed reaction is N(6),N(6),N(6)-trimethyl-L-lysyl(9)-[histone H3] + 2 2-oxoglutarate + 2 O2 = N(6)-methyl-L-lysyl(9)-[histone H3] + 2 formaldehyde + 2 succinate + 2 CO2. Histone demethylase that specifically demethylates 'Lys-9' of histone H3, thereby playing a role in histone code. Does not demethylate histone H3 'Lys-4', H3 'Lys-27', H3 'Lys-36' nor H4 'Lys-20'. Only able to demethylate trimethylated H3 'Lys-9', with a weaker activity than KDM4A, KDM4C and KDM4D. Demethylation of Lys residue generates formaldehyde and succinate. Plays a critical role in the development of the central nervous system (CNS). The chain is Lysine-specific demethylase 4B (KDM4B) from Homo sapiens (Human).